A 652-amino-acid chain; its full sequence is DNA mismatch repair protein MutL (652 aa).

It belongs to the DNA mismatch repair MutL/HexB family.

This protein is involved in the repair of mismatches in DNA. It is required for dam-dependent methyl-directed DNA mismatch repair. May act as a 'molecular matchmaker', a protein that promotes the formation of a stable complex between two or more DNA-binding proteins in an ATP-dependent manner without itself being part of a final effector complex. The chain is DNA mismatch repair protein MutL from Neorickettsia sennetsu (strain ATCC VR-367 / Miyayama) (Ehrlichia sennetsu).